Consider the following 126-residue polypeptide: Small ribosomal subunit protein uS12 (126 aa).

The segment at 1-26 (MPTINQLVRKGRASETTKSKSPALQD) is disordered. Aspartate 89 is modified (3-methylthioaspartic acid). Residues 101–126 (SLDTQGVKDRKQARSKYGAKRAKAAK) are disordered. Positions 113 to 126 (ARSKYGAKRAKAAK) are enriched in basic residues.

The protein belongs to the universal ribosomal protein uS12 family. As to quaternary structure, part of the 30S ribosomal subunit. Contacts proteins S8 and S17. May interact with IF1 in the 30S initiation complex.

In terms of biological role, with S4 and S5 plays an important role in translational accuracy. Interacts with and stabilizes bases of the 16S rRNA that are involved in tRNA selection in the A site and with the mRNA backbone. Located at the interface of the 30S and 50S subunits, it traverses the body of the 30S subunit contacting proteins on the other side and probably holding the rRNA structure together. The combined cluster of proteins S8, S12 and S17 appears to hold together the shoulder and platform of the 30S subunit. This is Small ribosomal subunit protein uS12 from Burkholderia pseudomallei (strain 1106a).